A 130-amino-acid chain; its full sequence is Riboflavin kinase (130 aa).

CDP is bound at residue 12–17; that stretch reads GLGVGA. 2 residues coordinate Mg(2+): Thr-39 and Asn-41. FMN contacts are provided by Thr-90 and Glu-98. Position 103-106 (103-106) interacts with CDP; it reads KNLR.

Belongs to the archaeal riboflavin kinase family. Mg(2+) serves as cofactor.

The enzyme catalyses riboflavin + CTP = CDP + FMN + H(+). It functions in the pathway cofactor biosynthesis; FMN biosynthesis; FMN from riboflavin (CTP route): step 1/1. Catalyzes the CTP-dependent phosphorylation of riboflavin (vitamin B2) to form flavin mononucleotide (FMN). This is Riboflavin kinase from Staphylothermus marinus (strain ATCC 43588 / DSM 3639 / JCM 9404 / F1).